The sequence spans 385 residues: Serpin-Z10 (385 aa).

The RCL stretch occupies residues 333 to 357; it reads GTEAAAVSVGVVSCTSFRRNPDFVA.

It belongs to the serpin family.

In terms of biological role, probable serine protease inhibitor. In Arabidopsis thaliana (Mouse-ear cress), this protein is Serpin-Z10.